Consider the following 188-residue polypeptide: Adenine phosphoribosyltransferase (188 aa).

Belongs to the purine/pyrimidine phosphoribosyltransferase family. In terms of assembly, homodimer.

Its subcellular location is the cytoplasm. The enzyme catalyses AMP + diphosphate = 5-phospho-alpha-D-ribose 1-diphosphate + adenine. Its pathway is purine metabolism; AMP biosynthesis via salvage pathway; AMP from adenine: step 1/1. Its function is as follows. Catalyzes a salvage reaction resulting in the formation of AMP, that is energically less costly than de novo synthesis. This chain is Adenine phosphoribosyltransferase, found in Neisseria meningitidis serogroup B (strain ATCC BAA-335 / MC58).